We begin with the raw amino-acid sequence, 187 residues long: UPF0340 protein SPN23F05980 (187 aa).

The protein belongs to the UPF0340 family.

The chain is UPF0340 protein SPN23F05980 from Streptococcus pneumoniae (strain ATCC 700669 / Spain 23F-1).